We begin with the raw amino-acid sequence, 247 residues long: Protein At-4/1 (247 aa).

Coiled coils occupy residues 39 to 126 (VESS…YKIR) and 182 to 247 (LLME…LSSS).

Interacts with viral tomato spotted wilt virus (TSWV) movement protein NSM, which is involved in cell-to cell spread of viral genome and enlargement of the host plasmodesmata size exclusion limit (SEL). As to expression, expressed in leaves (at protein level).

Its subcellular location is the endoplasmic reticulum. The protein localises to the cell junction. It localises to the plasmodesma. In terms of biological role, involved in intra- and inter-cellular trafficking through plasmodesmata (PD). The protein is Protein At-4/1 of Arabidopsis thaliana (Mouse-ear cress).